We begin with the raw amino-acid sequence, 252 residues long: Triosephosphate isomerase (252 aa).

9 to 11 (NWK) lines the substrate pocket. The Electrophile role is filled by histidine 95. The Proton acceptor role is filled by glutamate 167. Substrate contacts are provided by residues glycine 173, serine 213, and 234–235 (GG).

It belongs to the triosephosphate isomerase family. In terms of assembly, homodimer.

It is found in the cytoplasm. It carries out the reaction D-glyceraldehyde 3-phosphate = dihydroxyacetone phosphate. It participates in carbohydrate biosynthesis; gluconeogenesis. The protein operates within carbohydrate degradation; glycolysis; D-glyceraldehyde 3-phosphate from glycerone phosphate: step 1/1. Involved in the gluconeogenesis. Catalyzes stereospecifically the conversion of dihydroxyacetone phosphate (DHAP) to D-glyceraldehyde-3-phosphate (G3P). This chain is Triosephosphate isomerase, found in Lactiplantibacillus plantarum (strain ATCC BAA-793 / NCIMB 8826 / WCFS1) (Lactobacillus plantarum).